Consider the following 213-residue polypeptide: Receptor-binding cancer antigen expressed on SiSo cells (213 aa).

The Extracellular portion of the chain corresponds to 1-6 (MAITQF). The helical; Signal-anchor for type III membrane protein transmembrane segment at 7–27 (RLFKVCTCLATVLSFLKRLIC) threads the bilayer. Residues 28–213 (RSGRGRKLSG…EQNKMGVKLS (186 aa)) lie on the Cytoplasmic side of the membrane. Residue S36 is modified to Phosphoserine. The residue at position 41 (T41) is a Phosphothreonine. The residue at position 94 (Y94) is a Phosphotyrosine. Positions 168–209 (QAEEVLRQQKIADREKRAAEQQRKKMEKEAQRLLKKEQNKMG) form a coiled coil. Positions 179-206 (ADREKRAAEQQRKKMEKEAQRLLKKEQN) are enriched in basic and acidic residues. The interval 179 to 213 (ADREKRAAEQQRKKMEKEAQRLLKKEQNKMGVKLS) is disordered.

As to quaternary structure, homodimer.

The protein resides in the golgi apparatus membrane. Its function is as follows. May participate in suppression of cell proliferation and induces apoptotic cell death through activation of interleukin-1-beta converting enzyme (ICE)-like proteases. The polypeptide is Receptor-binding cancer antigen expressed on SiSo cells (Ebag9) (Rattus norvegicus (Rat)).